The chain runs to 478 residues: Sporozoite surface protein P36p (478 aa).

The first 41 residues, 1–41 (MYVLVLIHMCYHFTMKRKKLFVYFIFLSFIINFNFNININF), serve as a signal peptide directing secretion. 2 consecutive 6-Cys domains span residues 42–178 (VCSN…IKKT) and 181–326 (KIKG…FDNN). Cystine bridges form between cysteine 59-cysteine 71, cysteine 85-cysteine 159, cysteine 102-cysteine 157, cysteine 185-cysteine 209, cysteine 223-cysteine 302, and cysteine 243-cysteine 300. N-linked (GlcNAc...) asparagine glycosylation is found at asparagine 109 and asparagine 138. N-linked (GlcNAc...) asparagine glycans are attached at residues asparagine 229, asparagine 279, and asparagine 291. Serine 455 carries the GPI-anchor amidated serine lipid modification. Positions 456-478 (SSKYILFNNFLILFIFLIYIYST) are cleaved as a propeptide — removed in mature form.

It is found in the cell surface. It localises to the cell membrane. Involved in sporozoite infection of hepatocytes and replication therein. In Plasmodium falciparum (isolate 3D7), this protein is Sporozoite surface protein P36p (PF52).